The chain runs to 31 residues: MEPNQHVEAETELVTETLVEEVSIDGMCGVY.

Belongs to the mycofactocin precursor peptide family. In terms of processing, the post-translational modifications that lead to mycofactocin involve oxidative decarboxylation of the C-terminal tyrosine residue catalyzed by MftC, introduction of a tyramine-valine cross-link, removal of the modified C-terminal dipeptide by MftE. The released dipeptide then undergoes oxidative deamination by MftD, glycosylation by MftF and methylation by an unknown enzyme.

Precursor peptide that leads to mycofactocin (MFT) after extensive post-translational modifications by enzymes encoded by adjacent genes. Mycofactocin acts as a redox cofactor of nicotinamide-dependent oxidoreductases encoded in the same locus. Is required for the in vivo ethanol assimilation in M.smegmatis. The protein is Mycofactocin precursor peptide of Mycolicibacterium smegmatis (strain ATCC 700084 / mc(2)155) (Mycobacterium smegmatis).